We begin with the raw amino-acid sequence, 487 residues long: Cobyric acid synthase (487 aa).

In terms of domain architecture, GATase cobBQ-type spans lysine 251–alanine 439. Catalysis depends on cysteine 332, which acts as the Nucleophile. Histidine 431 is a catalytic residue.

Belongs to the CobB/CobQ family. CobQ subfamily.

It participates in cofactor biosynthesis; adenosylcobalamin biosynthesis. Catalyzes amidations at positions B, D, E, and G on adenosylcobyrinic A,C-diamide. NH(2) groups are provided by glutamine, and one molecule of ATP is hydrogenolyzed for each amidation. The polypeptide is Cobyric acid synthase (Dechloromonas aromatica (strain RCB)).